A 312-amino-acid chain; its full sequence is Protoheme IX farnesyltransferase (312 aa).

A run of 8 helical transmembrane segments spans residues 34 to 54, 56 to 76, 119 to 139, 152 to 172, 179 to 199, 225 to 245, 248 to 268, and 283 to 303; these read LVIF…HPVL, ITSL…NMAL, ILVN…YVVI, IVIG…AATG, LLLF…LALF, ILLY…LGYF, VYGV…IEVF, and LFAF…LEAV.

This sequence belongs to the UbiA prenyltransferase family. Protoheme IX farnesyltransferase subfamily.

Its subcellular location is the cell inner membrane. The catalysed reaction is heme b + (2E,6E)-farnesyl diphosphate + H2O = Fe(II)-heme o + diphosphate. The protein operates within porphyrin-containing compound metabolism; heme O biosynthesis; heme O from protoheme: step 1/1. In terms of biological role, converts heme B (protoheme IX) to heme O by substitution of the vinyl group on carbon 2 of heme B porphyrin ring with a hydroxyethyl farnesyl side group. This chain is Protoheme IX farnesyltransferase, found in Bradyrhizobium sp. (strain BTAi1 / ATCC BAA-1182).